We begin with the raw amino-acid sequence, 892 residues long: Ubiquitin carboxyl-terminal hydrolase 33 (892 aa).

The UBP-type zinc finger occupies 6–109 (CDCPHLESVG…PTSAKLQDSH (104 aa)). Residues Cys-8, His-10, Cys-30, Cys-33, Cys-43, Cys-48, Cys-53, His-60, His-64, His-70, Cys-83, and Cys-86 each contribute to the Zn(2+) site. Residues 148-665 (TGLKNIGNTC…EAYVLFYRKA (518 aa)) enclose the USP domain. Cys-157 (nucleophile) is an active-site residue. The segment at 268–311 (ENLDEDKSQSDNDFHSCDSGSSSDHAESESRKLSEELTESTMLI) is disordered. Basic and acidic residues-rich tracts occupy residues 272–283 (EDKSQSDNDFHS) and 291–302 (DHAESESRKLSE). The active-site Proton acceptor is the His-623. 2 DUSP domains span residues 667–760 (EEAQ…LYVC) and 768–871 (EKIE…RQNV).

This sequence belongs to the peptidase C19 family. USP20/USP33 subfamily.

The protein resides in the cytoplasm. It localises to the perinuclear region. It is found in the cytoskeleton. The protein localises to the microtubule organizing center. Its subcellular location is the centrosome. It catalyses the reaction Thiol-dependent hydrolysis of ester, thioester, amide, peptide and isopeptide bonds formed by the C-terminal Gly of ubiquitin (a 76-residue protein attached to proteins as an intracellular targeting signal).. Deubiquitinating enzyme involved in various processes such as centrosome duplication, cellular migration and beta-2 adrenergic receptor/ADRB2 recycling. Involved in regulation of centrosome duplication by mediating deubiquitination of ccp110 in S and G2/M phase, leading to stabilize ccp110 during the period which centrioles duplicate and elongate. Involved in cell migration via its interaction with intracellular domain of robo1, leading to regulate the Slit signaling. Plays a role in commissural axon guidance cross the ventral midline of the neural tube in a Slit-dependent manner, possibly by mediating the deubiquitination of robo1. Acts as a regulator of G-protein coupled receptor (GPCR) signaling by mediating the deubiquitination of beta-arrestins (arrb1 and arrb2) and beta-2 adrenergic receptor (adrb2). Deubiquitinates dio2, thereby regulating thyroid hormone regulation. Mediates deubiquitination of both 'Lys-48'- and 'Lys-63'-linked polyubiquitin chains. The polypeptide is Ubiquitin carboxyl-terminal hydrolase 33 (usp33) (Xenopus tropicalis (Western clawed frog)).